The primary structure comprises 110 residues: Ribonuclease P protein component (110 aa).

This sequence belongs to the RnpA family. As to quaternary structure, consists of a catalytic RNA component (M1 or rnpB) and a protein subunit.

It carries out the reaction Endonucleolytic cleavage of RNA, removing 5'-extranucleotides from tRNA precursor.. Its function is as follows. RNaseP catalyzes the removal of the 5'-leader sequence from pre-tRNA to produce the mature 5'-terminus. It can also cleave other RNA substrates such as 4.5S RNA. The protein component plays an auxiliary but essential role in vivo by binding to the 5'-leader sequence and broadening the substrate specificity of the ribozyme. The sequence is that of Ribonuclease P protein component from Mesorhizobium japonicum (strain LMG 29417 / CECT 9101 / MAFF 303099) (Mesorhizobium loti (strain MAFF 303099)).